Consider the following 251-residue polypeptide: 1-(5-phosphoribosyl)-5-[(5-phosphoribosylamino)methylideneamino] imidazole-4-carboxamide isomerase (251 aa).

The active-site Proton acceptor is the Asp-8. Asp-131 serves as the catalytic Proton donor.

Belongs to the HisA/HisF family.

Its subcellular location is the cytoplasm. It catalyses the reaction 1-(5-phospho-beta-D-ribosyl)-5-[(5-phospho-beta-D-ribosylamino)methylideneamino]imidazole-4-carboxamide = 5-[(5-phospho-1-deoxy-D-ribulos-1-ylimino)methylamino]-1-(5-phospho-beta-D-ribosyl)imidazole-4-carboxamide. Its pathway is amino-acid biosynthesis; L-histidine biosynthesis; L-histidine from 5-phospho-alpha-D-ribose 1-diphosphate: step 4/9. This is 1-(5-phosphoribosyl)-5-[(5-phosphoribosylamino)methylideneamino] imidazole-4-carboxamide isomerase from Burkholderia lata (strain ATCC 17760 / DSM 23089 / LMG 22485 / NCIMB 9086 / R18194 / 383).